We begin with the raw amino-acid sequence, 339 residues long: D-erythrose-4-phosphate dehydrogenase (339 aa).

NAD(+)-binding positions include Arg-12 to Ile-13 and Arg-81. Substrate is bound by residues Ser-154–Thr-156, Arg-200, Thr-213–Lys-214, and Arg-236. Cys-155 (nucleophile) is an active-site residue. Residue Asn-318 coordinates NAD(+).

This sequence belongs to the glyceraldehyde-3-phosphate dehydrogenase family. Epd subfamily. In terms of assembly, homotetramer.

The protein localises to the cytoplasm. It carries out the reaction D-erythrose 4-phosphate + NAD(+) + H2O = 4-phospho-D-erythronate + NADH + 2 H(+). It participates in cofactor biosynthesis; pyridoxine 5'-phosphate biosynthesis; pyridoxine 5'-phosphate from D-erythrose 4-phosphate: step 1/5. Functionally, catalyzes the NAD-dependent conversion of D-erythrose 4-phosphate to 4-phosphoerythronate. This is D-erythrose-4-phosphate dehydrogenase from Escherichia fergusonii (strain ATCC 35469 / DSM 13698 / CCUG 18766 / IAM 14443 / JCM 21226 / LMG 7866 / NBRC 102419 / NCTC 12128 / CDC 0568-73).